The sequence spans 310 residues: ADP-L-glycero-D-manno-heptose-6-epimerase (310 aa).

Residues 10 to 11, 31 to 32, lysine 38, lysine 53, 75 to 79, and asparagine 92 each bind NADP(+); these read FI, DN, and EGACS. Tyrosine 140 functions as the Proton acceptor in the catalytic mechanism. Lysine 144 is a binding site for NADP(+). Substrate is bound at residue asparagine 169. Residues valine 170 and lysine 178 each contribute to the NADP(+) site. Catalysis depends on lysine 178, which acts as the Proton acceptor. Substrate-binding positions include serine 180, histidine 187, 201–204, arginine 209, and tyrosine 272; that span reads FEGS.

This sequence belongs to the NAD(P)-dependent epimerase/dehydratase family. HldD subfamily. Homopentamer. It depends on NADP(+) as a cofactor.

The catalysed reaction is ADP-D-glycero-beta-D-manno-heptose = ADP-L-glycero-beta-D-manno-heptose. It functions in the pathway nucleotide-sugar biosynthesis; ADP-L-glycero-beta-D-manno-heptose biosynthesis; ADP-L-glycero-beta-D-manno-heptose from D-glycero-beta-D-manno-heptose 7-phosphate: step 4/4. Catalyzes the interconversion between ADP-D-glycero-beta-D-manno-heptose and ADP-L-glycero-beta-D-manno-heptose via an epimerization at carbon 6 of the heptose. This chain is ADP-L-glycero-D-manno-heptose-6-epimerase, found in Salmonella dublin (strain CT_02021853).